The chain runs to 331 residues: Gem-associated protein 2 (331 aa).

3 disordered regions span residues 1–23 (MDEFQSKAFEVGEEIEPDDNEPL), 101–130 (SNRPSNNNNNNNNNNNNNNNNNNNNNLIPQ), and 151–222 (NNNN…TKKP). Residues 11–21 (VGEEIEPDDNE) are compositionally biased toward acidic residues. Positions 106-126 (NNNNNNNNNNNNNNNNNNNNN) are enriched in low complexity. A compositionally biased stretch (acidic residues) spans 165–215 (DNQEDDDDDENNEDYEYNENKEEEEEEEEEEEEEEEVEEEEEEEEEEEEVV). Residues 173 to 224 (DENNEDYEYNENKEEEEEEEEEEEEEEEVEEEEEEEEEEEEVVDYSTKKPTL) are a coiled coil.

The protein belongs to the gemin-2 family.

Its subcellular location is the nucleus. The protein resides in the gem. It is found in the cytoplasm. Its function is as follows. The SMN complex catalyzes the assembly of small nuclear ribonucleoproteins (snRNPs), the building blocks of the spliceosome, and thereby plays an important role in the splicing of cellular pre-mRNAs. Most spliceosomal snRNPs contain a common set of Sm proteins SNRPB, SNRPD1, SNRPD2, SNRPD3, SNRPE, SNRPF and SNRPG that assemble in a heptameric protein ring on the Sm site of the small nuclear RNA to form the core snRNP (Sm core). In the cytosol, the Sm proteins SNRPD1, SNRPD2, SNRPE, SNRPF and SNRPG (5Sm) are trapped in an inactive 6S pICln-Sm complex by the chaperone CLNS1A that controls the assembly of the core snRNP. To assemble core snRNPs, the SMN complex accepts the trapped 5Sm proteins from CLNS1A. Binding of snRNA inside 5Sm ultimately triggers eviction of the SMN complex, thereby allowing binding of SNRPD3 and SNRPB to complete assembly of the core snRNP. Within the SMN complex, GEMIN2 constrains the conformation of 5Sm, thereby promoting 5Sm binding to snRNA containing the snRNP code (a nonameric Sm site and a 3'-adjacent stem-loop), thus preventing progression of assembly until a cognate substrate is bound. In terms of biological role, may play an essential role in spliceosomal snRNP assembly in the cytoplasm and may be required for pre-mRNA splicing in the nucleus. The polypeptide is Gem-associated protein 2 (gemin2) (Dictyostelium discoideum (Social amoeba)).